The following is a 289-amino-acid chain: Ribosomal protein L11 methyltransferase (289 aa).

S-adenosyl-L-methionine-binding residues include Thr-135, Gly-156, Asp-179, and Asn-225.

Belongs to the methyltransferase superfamily. PrmA family.

It localises to the cytoplasm. The enzyme catalyses L-lysyl-[protein] + 3 S-adenosyl-L-methionine = N(6),N(6),N(6)-trimethyl-L-lysyl-[protein] + 3 S-adenosyl-L-homocysteine + 3 H(+). Its function is as follows. Methylates ribosomal protein L11. This chain is Ribosomal protein L11 methyltransferase, found in Chlorobaculum tepidum (strain ATCC 49652 / DSM 12025 / NBRC 103806 / TLS) (Chlorobium tepidum).